A 1240-amino-acid chain; its full sequence is Serine/threonine-protein kinase TAO2 (1240 aa).

Serine 9 is subject to Phosphoserine. A Protein kinase domain is found at 28–281 (FSDLREIGHG…SEVLLKHRFV (254 aa)). Residues 34–42 (IGHGSFGAV) and lysine 57 each bind ATP. Aspartate 151 acts as the Proton acceptor in catalysis. A Phosphoserine modification is found at serine 181. The tract at residues 320 to 463 (APNGPGAEAP…PTSTSSSARR (144 aa)) is disordered. Residues 356-380 (SSHSVPSMSISASSQSSSVNSLADA) show a composition bias toward low complexity. Residues 381 to 401 (SDNEEEEEEEEEEEEEEEEEG) are compositionally biased toward acidic residues. A compositionally biased stretch (basic and acidic residues) spans 402-417 (PESREMAMMQEGEHTV). Residue serine 422 is modified to Phosphoserine. Coiled coils occupy residues 493–528 (SALREQLSGYKRMRRQHQKQLLALESRLRGEREEHS) and 581–608 (KELAALLEAQKRTYKLRKEQLKEELQEN). Serine 663 carries the post-translational modification Phosphoserine. Residues 688–720 (LRQHEATRELELRQLQAVQRTRAELTRLQHQTE) adopt a coiled-coil conformation. Phosphoserine occurs at positions 782, 830, and 832. Residues 805–934 (RILGKEGTTL…GDGCPSPDIP (130 aa)) adopt a coiled-coil conformation. Residues 899-946 (VLTPVPEEEEEEEEEGGAPIGTHRDPGDGCPSPDIPPEPPPSHLRQYP) are disordered. A compositionally biased stretch (acidic residues) spans 904 to 914 (PEEEEEEEEEG). Residues 931–940 (PDIPPEPPPS) are compositionally biased toward pro residues. Transmembrane regions (helical) follow at residues 972 to 992 (LLPLLLLLLLPLLAAQGGGGL), 994 to 1014 (AALLALEVGLVGLGASYLFLC), 1019 to 1039 (LPPGLFLLLAQGTALLAVLSL), 1045 to 1065 (LMGVPLGLGAAWLLAWPSLAL), and 1175 to 1195 (LASCLPPWAVHILASWGLLKG). Leucine 999 bears the Omega-N-methylarginine mark. At leucine 1037 the chain carries Phosphoserine. The segment at 1212 to 1240 (LGLSASRQLPPGTVAGRRSQTRRTLPPWR) is disordered.

This sequence belongs to the protein kinase superfamily. STE Ser/Thr protein kinase family. STE20 subfamily. Interacts with MAP2K3 and MAP2K6. Self-associates. Interacts with tubulins. Interacts with MAP3K7 and interferes with MAP3K7-binding to CHUK and thus prevents NF-kappa-B activation. Isoform 2 interacts with PCDH8; this complex may also include CDH2. Mg(2+) is required as a cofactor. Post-translationally, autophosphorylated. Phosphorylated by ATM. Phosphorylated on Ser-1037 by MAPK14. This phosphorylation is required PCDH8 for endocytosis.

It localises to the cytoplasmic vesicle membrane. It is found in the cytoplasm. The protein resides in the cytoskeleton. The protein localises to the cell projection. Its subcellular location is the dendrite. The catalysed reaction is L-seryl-[protein] + ATP = O-phospho-L-seryl-[protein] + ADP + H(+). The enzyme catalyses L-threonyl-[protein] + ATP = O-phospho-L-threonyl-[protein] + ADP + H(+). Its function is as follows. Serine/threonine-protein kinase involved in different processes such as membrane blebbing and apoptotic bodies formation DNA damage response and MAPK14/p38 MAPK stress-activated MAPK cascade. Phosphorylates itself, MBP, activated MAPK8, MAP2K3, MAP2K6 and tubulins. Activates the MAPK14/p38 MAPK signaling pathway through the specific activation and phosphorylation of the upstream MAP2K3 and MAP2K6 kinases. In response to DNA damage, involved in the G2/M transition DNA damage checkpoint by activating the p38/MAPK14 stress-activated MAPK cascade, probably by mediating phosphorylation of upstream MAP2K3 and MAP2K6 kinases. May affect microtubule organization and stability. May play a role in the osmotic stress-MAPK8 pathway. Prevents MAP3K7-mediated activation of CHUK, and thus NF-kappa-B activation. Isoform 2, but not isoform 1, is required for PCDH8 endocytosis. Following homophilic interactions between PCDH8 extracellular domains, isoform 2 phosphorylates and activates MAPK14/p38 MAPK which in turn phosphorylates isoform 2. This process leads to PCDH8 endocytosis and CDH2 cointernalization. Both isoforms are involved in MAPK14/p38 MAPK activation. This chain is Serine/threonine-protein kinase TAO2 (Taok2), found in Mus musculus (Mouse).